We begin with the raw amino-acid sequence, 213 residues long: uncharacterized protein (213 aa).

This is an uncharacterized protein from Saccharomyces cerevisiae (strain ATCC 204508 / S288c) (Baker's yeast).